Here is a 354-residue protein sequence, read N- to C-terminus: uncharacterized protein (354 aa).

Polar residues predominate over residues 309–326 (VNSANSINTANTRSQTGG). The segment at 309–333 (VNSANSINTANTRSQTGGQDEEDFE) is disordered. Positions 326–353 (GQDEEDFEKKYKKYKNKYAKLKNQKTSN) form a coiled coil.

The protein localises to the virion. This is an uncharacterized protein from Acanthamoeba polyphaga (Amoeba).